Reading from the N-terminus, the 703-residue chain is Centrosomal protein of 63 kDa (703 aa).

Methionine 1 bears the N-acetylmethionine mark. 4 coiled-coil regions span residues 22–199 (EAEL…ESVE), 242–306 (MTVL…QHAV), 353–533 (LEGS…STQM), and 676–703 (HILE…TALK). Residue serine 278 is modified to Phosphoserine.

The protein belongs to the CEP63 family. As to quaternary structure, interacts with CEP152 and CDK1; these interactions recruit both ligands to centrosomes. Interacts with CDK2, CDK5RAP2, WDR62, CEP90, KIAA0753/moonraker and CCDC14. CEP63, CDK5RAP2, CEP152, WDR62 are proposed to form a stepwise assembled complex at the centrosome forming a ring near parental centrioles. Interacts with CCDC57; the interaction is required for their location to proximal end of centrioles. Interacts with FXR1; promoting its stabilization. In terms of assembly, (Microbial infection) Interacts with zika virus serine protease NS3; this interaction disorganizes the centrosome. Post-translationally, polyubiquitinated via 'Lys-48'-linked ubiquitin, leading to its degradation. Deubiquitinated by USP36, promoting its stabilization.

The protein resides in the cytoplasm. The protein localises to the cytoskeleton. It localises to the microtubule organizing center. It is found in the centrosome. Its subcellular location is the centriole. The protein resides in the centriolar satellite. Functionally, required for normal spindle assembly. Plays a key role in mother-centriole-dependent centriole duplication; the function seems also to involve CEP152, CDK5RAP2 and WDR62 through a stepwise assembled complex at the centrosome that recruits CDK2 required for centriole duplication. Reported to be required for centrosomal recruitment of CEP152; however, this function has been questioned. Also recruits CDK1 to centrosomes. Plays a role in DNA damage response. Following DNA damage, such as double-strand breaks (DSBs), is removed from centrosomes; this leads to the inactivation of spindle assembly and delay in mitotic progression. Promotes stabilization of FXR1 protein by inhibiting FXR1 ubiquitination. The polypeptide is Centrosomal protein of 63 kDa (Homo sapiens (Human)).